A 149-amino-acid chain; its full sequence is UPF0756 membrane protein BBR47_32760 (149 aa).

A run of 5 helical transmembrane segments spans residues 3–23 (WISIILLVLLALGVIGNNATV), 48–68 (HGLQLGIIILTIGIMTPLASG), 85–105 (LLAVAVGMFVAYLAGKGTVLM), 106–126 (SQNPLIVTGLLLGTIAGVTFF), and 128–148 (GVAVGPLIAAGILAFILQFLP).

It belongs to the UPF0756 family.

It is found in the cell membrane. The polypeptide is UPF0756 membrane protein BBR47_32760 (Brevibacillus brevis (strain 47 / JCM 6285 / NBRC 100599)).